A 245-amino-acid chain; its full sequence is MIIPALDLIEGKVVRLHQGDYGQQRDYGNHPLPRLQDYQQQGAQVLHLVDLTGAKDPAARQIPLLRELLAGVDVPVQVGGGIRNEQDVVALLEAGAARVVVGSTAVKQPEMVQQWFERYGAEAIVLALDVRINEAGCKHVAISGWQENSDATLEQIVEQYLPYGLKHVLCTDISRDGTLSGSNVELYQEVCQRYPQVAFQASGGIGCLDDIARLRGSGVQGVIVGRALLDGKFNVKEAIACWQNV.

Residue D7 is the Proton acceptor of the active site. D129 acts as the Proton donor in catalysis.

This sequence belongs to the HisA/HisF family.

It localises to the cytoplasm. The catalysed reaction is 1-(5-phospho-beta-D-ribosyl)-5-[(5-phospho-beta-D-ribosylamino)methylideneamino]imidazole-4-carboxamide = 5-[(5-phospho-1-deoxy-D-ribulos-1-ylimino)methylamino]-1-(5-phospho-beta-D-ribosyl)imidazole-4-carboxamide. The protein operates within amino-acid biosynthesis; L-histidine biosynthesis; L-histidine from 5-phospho-alpha-D-ribose 1-diphosphate: step 4/9. This Yersinia pestis bv. Antiqua (strain Antiqua) protein is 1-(5-phosphoribosyl)-5-[(5-phosphoribosylamino)methylideneamino] imidazole-4-carboxamide isomerase.